We begin with the raw amino-acid sequence, 308 residues long: HTH-type transcriptional regulator YtlI (308 aa).

The HTH lysR-type domain occupies 1-57 (MELRSIKTFHTIVKFGSFYKAAEILNYSQPTISMRMKQLEQDLGVLLFERGKSLQLT). Positions 18-37 (FYKAAEILNYSQPTISMRMK) form a DNA-binding region, H-T-H motif.

The protein belongs to the LysR transcriptional regulatory family.

Positively regulates the expression of ytmI operon in response to the availability of sulfur sources. The sequence is that of HTH-type transcriptional regulator YtlI (ytlI) from Bacillus subtilis (strain 168).